A 159-amino-acid chain; its full sequence is 2-C-methyl-D-erythritol 2,4-cyclodiphosphate synthase (159 aa).

Positions 8 and 10 each coordinate a divalent metal cation. 4-CDP-2-C-methyl-D-erythritol 2-phosphate-binding positions include 8-10 and 34-35; these read DVH and HS. His42 contacts a divalent metal cation. Residues 56 to 58, 61 to 65, 100 to 106, 132 to 135, Phe139, and Arg142 contribute to the 4-CDP-2-C-methyl-D-erythritol 2-phosphate site; these read DIG, FPDTD, AQAPKML, and TTTE.

Belongs to the IspF family. In terms of assembly, homotrimer. It depends on a divalent metal cation as a cofactor.

The catalysed reaction is 4-CDP-2-C-methyl-D-erythritol 2-phosphate = 2-C-methyl-D-erythritol 2,4-cyclic diphosphate + CMP. Its pathway is isoprenoid biosynthesis; isopentenyl diphosphate biosynthesis via DXP pathway; isopentenyl diphosphate from 1-deoxy-D-xylulose 5-phosphate: step 4/6. Functionally, involved in the biosynthesis of isopentenyl diphosphate (IPP) and dimethylallyl diphosphate (DMAPP), two major building blocks of isoprenoid compounds. Catalyzes the conversion of 4-diphosphocytidyl-2-C-methyl-D-erythritol 2-phosphate (CDP-ME2P) to 2-C-methyl-D-erythritol 2,4-cyclodiphosphate (ME-CPP) with a corresponding release of cytidine 5-monophosphate (CMP). In Salmonella arizonae (strain ATCC BAA-731 / CDC346-86 / RSK2980), this protein is 2-C-methyl-D-erythritol 2,4-cyclodiphosphate synthase.